The primary structure comprises 346 residues: MNIDTREITLEPADNARLLSLCGPFDDNIKQLERRLGIEINRRDNHFKLTGRPICVTAAADILRSLYVDTAPMRGQIQDIEPEQIHLAIKEARVLEQSAESVPEYGKAVNIKTKRGVIKPRTPNQAQYIANILDHDITFGVGPAGTGKTYLAVAAAVDALERQEIRRILLTRPAVEAGEKLGFLPGDLSQKVDPYLRPLYDALFEMLGFEKVEKLIERNVIEVAPLAYMRGRTLNDAFIILDESQNTTIEQMKMFLTRIGFNSKAVITGDVTQIDLPRNTKSGLRHAIEVLADVEEISFNFFHSEDVVRHPVVARIVNAYEAWEEAEQKRKAALAAERKREEQEQK.

ATP is bound at residue 142–149 (GPAGTGKT).

It belongs to the PhoH family.

It is found in the cytoplasm. This chain is PhoH-like protein (ybeZ), found in Escherichia coli O157:H7.